The primary structure comprises 336 residues: Vomeronasal type-1 receptor 102 (336 aa).

The Extracellular portion of the chain corresponds to 1 to 42; it reads MVGVQICQGMTSEILFFSLQPQFSNMMNKNSRLHIDSNIRNT. Residues 43–63 traverse the membrane as a helical segment; it reads FFTEIGIGVSANSLLLLFNIF. Over 64–75 the chain is Cytoplasmic; the sequence is KFIHGQRSRLTD. Residues 76 to 96 traverse the membrane as a helical segment; that stretch reads LPIGLLSLINLLMLLIMACIA. At 97–120 the chain is on the extracellular side; sequence TDIFISCRRWDDIICKSLLYLYRT. A disulfide bridge links cysteine 111 with cysteine 198. Residues 121 to 140 traverse the membrane as a helical segment; the sequence is FRGLSLSTTCLLSVLQAIIL. Residues 141-157 lie on the Cytoplasmic side of the membrane; it reads SPRSSCLAKYKHKPPHH. Residues 158 to 178 form a helical membrane-spanning segment; that stretch reads IFCAMLFLSVLYMFISSHLLL. Residues 179-213 are Extracellular-facing; the sequence is SIIATPNLTTNDFIHVSQSCSILPMSYLMQSMFST. Asparagine 185 is a glycosylation site (N-linked (GlcNAc...) asparagine). The chain crosses the membrane as a helical span at residues 214–234; sequence LLAIRNVFLISLIVLSTWYMV. At 235-264 the chain is on the cytoplasmic side; that stretch reads ALLCRHRKQTRHLQDTSLSRKASPEQRATR. A helical membrane pass occupies residues 265 to 285; sequence SILMLRSLFVLMSIFDSIVSC. At 286 to 296 the chain is on the extracellular side; the sequence is SRTMYLNDPTS. A helical transmembrane segment spans residues 297–317; it reads YSIQLLVVHIYATVSPFVFMI. Topologically, residues 318 to 336 are cytoplasmic; it reads TEKHIVNYLKSMYVRVLNV.

It belongs to the G-protein coupled receptor 1 family. As to expression, expressed in 1-4% of neurons of the vomeronasal organ. Only one pheromone receptor gene may be expressed in a particular neuron. Not expressed in the main olfactory epithelium.

It localises to the cell membrane. Its function is as follows. Putative pheromone receptor implicated in the regulation of social as well as reproductive behavior. The sequence is that of Vomeronasal type-1 receptor 102 (Vom1r102) from Rattus norvegicus (Rat).